We begin with the raw amino-acid sequence, 490 residues long: Cytochrome P450 71A22 (490 aa).

The helical transmembrane segment at 2–22 (ESMIRIILLSLIIFITILFFI) threads the bilayer. C432 contacts heme.

This sequence belongs to the cytochrome P450 family. The cofactor is heme.

It localises to the membrane. The polypeptide is Cytochrome P450 71A22 (CYP71A22) (Arabidopsis thaliana (Mouse-ear cress)).